We begin with the raw amino-acid sequence, 131 residues long: D-ribose pyranase (131 aa).

The active-site Proton donor is the histidine 20. Substrate contacts are provided by residues aspartate 28, histidine 98, and 120 to 122; that span reads YAN.

The protein belongs to the RbsD / FucU family. RbsD subfamily. Homodecamer.

The protein resides in the cytoplasm. It carries out the reaction beta-D-ribopyranose = beta-D-ribofuranose. It functions in the pathway carbohydrate metabolism; D-ribose degradation; D-ribose 5-phosphate from beta-D-ribopyranose: step 1/2. Its function is as follows. Catalyzes the interconversion of beta-pyran and beta-furan forms of D-ribose. This chain is D-ribose pyranase, found in Bacillus cereus (strain G9842).